The chain runs to 410 residues: Neuroserpin (410 aa).

The N-terminal stretch at 1-16 is a signal peptide; sequence MTYLELLALLALQSVV. 3 N-linked (GlcNAc...) asparagine glycosylation sites follow: asparagine 157, asparagine 321, and asparagine 401. Serine 403 is a glycosylation site (O-linked (Xyl...) (chondroitin sulfate) serine).

It belongs to the serpin family. As to expression, detected in neurons in embryonic brain cortex (at protein level). During embryonic development mostly expressed in CNS. In adult expressed in brain and much less in spinal cord, heart, kidney and testis.

The protein localises to the secreted. It localises to the cytoplasmic vesicle. The protein resides in the secretory vesicle lumen. Its subcellular location is the perikaryon. Serine protease inhibitor that inhibits plasminogen activators and plasmin but not thrombin. May be involved in the formation or reorganization of synaptic connections as well as for synaptic plasticity in the adult nervous system. May protect neurons from cell damage by tissue-type plasminogen activator. This is Neuroserpin (Serpini1) from Mus musculus (Mouse).